Reading from the N-terminus, the 101-residue chain is Urease subunit beta (101 aa).

It belongs to the urease beta subunit family. As to quaternary structure, heterotrimer of UreA (gamma), UreB (beta) and UreC (alpha) subunits. Three heterotrimers associate to form the active enzyme.

The protein resides in the cytoplasm. It carries out the reaction urea + 2 H2O + H(+) = hydrogencarbonate + 2 NH4(+). Its pathway is nitrogen metabolism; urea degradation; CO(2) and NH(3) from urea (urease route): step 1/1. The polypeptide is Urease subunit beta (Chelativorans sp. (strain BNC1)).